A 126-amino-acid chain; its full sequence is Protein ApaG (126 aa).

One can recognise an ApaG domain in the interval 2-126 (SQVESPIKIK…FRLAVPGIFQ (125 aa)).

This chain is Protein ApaG, found in Shewanella frigidimarina (strain NCIMB 400).